We begin with the raw amino-acid sequence, 123 residues long: Small ribosomal subunit protein uS12 (123 aa).

A 3-methylthioaspartic acid modification is found at Asp89. Positions Thr101 to Lys123 are disordered. The span at Arg110–Lys123 shows a compositional bias: basic residues.

It belongs to the universal ribosomal protein uS12 family. As to quaternary structure, part of the 30S ribosomal subunit. Contacts proteins S8 and S17. May interact with IF1 in the 30S initiation complex.

In terms of biological role, with S4 and S5 plays an important role in translational accuracy. Functionally, interacts with and stabilizes bases of the 16S rRNA that are involved in tRNA selection in the A site and with the mRNA backbone. Located at the interface of the 30S and 50S subunits, it traverses the body of the 30S subunit contacting proteins on the other side and probably holding the rRNA structure together. The combined cluster of proteins S8, S12 and S17 appears to hold together the shoulder and platform of the 30S subunit. The polypeptide is Small ribosomal subunit protein uS12 (Paramagnetospirillum magneticum (strain ATCC 700264 / AMB-1) (Magnetospirillum magneticum)).